The following is a 59-amino-acid chain: UPF0434 protein VC_1876 (59 aa).

It belongs to the UPF0434 family.

The sequence is that of UPF0434 protein VC_1876 from Vibrio cholerae serotype O1 (strain ATCC 39315 / El Tor Inaba N16961).